Here is a 517-residue protein sequence, read N- to C-terminus: 2,4,6-trichlorophenol monooxygenase (517 aa).

Belongs to the FADH(2)-utilizing monooxygenase family. As to quaternary structure, homotetramer in solution.

It carries out the reaction 2,4,6-trichlorophenol + FADH2 + O2 = 2-chloro-6-hydroxy-1,4-benzoquinone + FAD + 2 chloride + 3 H(+). It catalyses the reaction 2,4,6-trichlorophenol + FADH2 + O2 = 2,6-dichlorobenzoquinone + FAD + chloride + H2O + H(+). The enzyme catalyses 2,6-dichlorobenzoquinone + H2O = 2-chloro-6-hydroxy-1,4-benzoquinone + chloride + 2 H(+). It functions in the pathway aromatic compound metabolism. It participates in xenobiotic degradation. In terms of biological role, involved in the degradation of 2,4,6-trichlorophenol (2,4,6-TCP). Catalyzes the conversion of 2,4,6-TCP to 6-chlorohydroxyquinol (6-CHQ). The monooxygenase oxidizes 2,4,6-TCP to 2,6-dichloroquinone (2,6-DCBQ), which remains with the enzyme and is hydrolyzed to 2-chlorohydroxyquinone. 2-chlorohydroxyquinone is chemically reduced by ascorbate and NADH to 6-chlorohydroxyquinol (6-CHQ). The polypeptide is 2,4,6-trichlorophenol monooxygenase (Cupriavidus pinatubonensis (strain JMP 134 / LMG 1197) (Cupriavidus necator (strain JMP 134))).